The chain runs to 517 residues: Crotonobetaine/carnitine--CoA ligase (517 aa).

Belongs to the ATP-dependent AMP-binding enzyme family.

It carries out the reaction 4-(trimethylamino)butanoate + ATP + CoA = 4-(trimethylamino)butanoyl-CoA + AMP + diphosphate. The catalysed reaction is crotonobetaine + ATP + CoA = crotonobetainyl-CoA + AMP + diphosphate. The enzyme catalyses (R)-carnitine + ATP + CoA = (R)-carnitinyl-CoA + AMP + diphosphate. The protein operates within amine and polyamine metabolism; carnitine metabolism. Catalyzes the transfer of CoA to carnitine, generating the initial carnitinyl-CoA needed for the CaiB reaction cycle. Also has activity toward crotonobetaine and gamma-butyrobetaine. This chain is Crotonobetaine/carnitine--CoA ligase, found in Escherichia coli O6:K15:H31 (strain 536 / UPEC).